Here is a 582-residue protein sequence, read N- to C-terminus: Membrane protein insertase YidC (582 aa).

4 consecutive transmembrane segments (helical) span residues 4–24 (NTVLAVVLSMLVFGGWLYIQQ), 376–396 (IIPNWGVALLLLTLLMRIIFF), 446–466 (ASGCLPLLIQLPFLFAMFGLF), and 542–562 (FMPLFFFFLFYNAPSGLLLFW).

Belongs to the OXA1/ALB3/YidC family. Type 1 subfamily. In terms of assembly, interacts with the Sec translocase complex via SecD. Specifically interacts with transmembrane segments of nascent integral membrane proteins during membrane integration.

Its subcellular location is the cell inner membrane. Required for the insertion and/or proper folding and/or complex formation of integral membrane proteins into the membrane. Involved in integration of membrane proteins that insert both dependently and independently of the Sec translocase complex, as well as at least some lipoproteins. Aids folding of multispanning membrane proteins. This is Membrane protein insertase YidC from Treponema denticola (strain ATCC 35405 / DSM 14222 / CIP 103919 / JCM 8153 / KCTC 15104).